Reading from the N-terminus, the 385-residue chain is Lipid-A-disaccharide synthase 2 (385 aa).

The protein belongs to the LpxB family.

It carries out the reaction a lipid X + a UDP-2-N,3-O-bis[(3R)-3-hydroxyacyl]-alpha-D-glucosamine = a lipid A disaccharide + UDP + H(+). Its pathway is bacterial outer membrane biogenesis; LPS lipid A biosynthesis. Functionally, condensation of UDP-2,3-diacylglucosamine and 2,3-diacylglucosamine-1-phosphate to form lipid A disaccharide, a precursor of lipid A, a phosphorylated glycolipid that anchors the lipopolysaccharide to the outer membrane of the cell. In Legionella pneumophila (strain Paris), this protein is Lipid-A-disaccharide synthase 2.